A 194-amino-acid polypeptide reads, in one-letter code: Casparian strip membrane protein 2 (194 aa).

The Cytoplasmic segment spans residues 1-32; it reads MSTTIDIPESSKVVKGKGVVAAPLRPGGWKKG. Residues 33–53 form a helical membrane-spanning segment; it reads VAIMDFILRLGAIAAALGAAA. Topologically, residues 54-82 are extracellular; that stretch reads TMGTSDQTLPFFTQFFQFEASYDSFTTFQ. The helical transmembrane segment at 83 to 103 threads the bilayer; sequence FFVITMALVGGYLVLSLPFSV. The Cytoplasmic portion of the chain corresponds to 104 to 115; sequence VAIIRPHAVGPR. The chain crosses the membrane as a helical span at residues 116–136; sequence LFLIILDTVFLTLATASAASA. Over 137 to 168 the chain is Extracellular; it reads AAVVYLAHNGDQDTNWLAICNQFGDFCAQTSS. A helical membrane pass occupies residues 169–189; it reads AVVSSFVAVVVFVLLIVMSAL. At 190-194 the chain is on the cytoplasmic side; that stretch reads AMGKP.

This sequence belongs to the Casparian strip membrane proteins (CASP) family. Homodimer and heterodimers.

Its subcellular location is the cell membrane. Regulates membrane-cell wall junctions and localized cell wall deposition. Required for establishment of the Casparian strip membrane domain (CSD) and the subsequent formation of Casparian strips, a cell wall modification of the root endodermis that determines an apoplastic barrier between the intraorganismal apoplasm and the extraorganismal apoplasm and prevents lateral diffusion. The protein is Casparian strip membrane protein 2 of Vigna unguiculata (Cowpea).